The sequence spans 628 residues: E3 SUMO-protein ligase PIAS3 (628 aa).

The interaction with CCAR2 stretch occupies residues Met-1 to Ser-200. One can recognise an SAP domain in the interval Val-11 to Leu-45. Positions Leu-19–Leu-23 match the LXXLL motif motif. Residues Lys-46, Lys-56, Lys-230, and Lys-307 each participate in a glycyl lysine isopeptide (Lys-Gly) (interchain with G-Cter in SUMO2) cross-link. The region spanning Met-115–Leu-280 is the PINIT domain. Residues Pro-312–Asp-393 form an SP-RING-type zinc finger. Zn(2+) is bound by residues Cys-343, His-345, Cys-366, and Cys-369. Positions Leu-450–Asp-460 are SUMO1-binding. Residues Lys-466 and Lys-482 each participate in a glycyl lysine isopeptide (Lys-Gly) (interchain with G-Cter in SUMO2) cross-link. The disordered stretch occupies residues Gly-571 to Asp-628.

The protein belongs to the PIAS family. In terms of assembly, monomer. Interacts with PLAG1 and ZFHX3. Interacts with STAT5A; the interaction occurs on stimulation by PRL. Binds SUMO1 and UBE2I. Interacts with AR, BCL11A, HMGA2, IRF1 and NCOA2. Interacts with MITF; the interaction inhibits the transcriptional activity of MITF. Interacts with STAT3; the interaction occurs on stimulation by IL6, CNTF or OSM and inhibits the DNA binding activity of STAT3. Interacts with GFI1; the interaction relieves the inhibitory effect of PIAS3 on STAT3-mediated transcriptional activity. Interacts with MTA1. Interacts with CCAR2 (via N-terminus). Interacts with TRIM8. Interacts with PRDM1. Sumoylated. As to expression, expressed in kidney, heart, spleen, brain and cerebellum; weak expression, if any, in liver and lung.

Its subcellular location is the cytoplasm. It is found in the nucleus. The protein localises to the nucleus speckle. Its pathway is protein modification; protein sumoylation. Its function is as follows. Functions as an E3-type small ubiquitin-like modifier (SUMO) ligase, stabilizing the interaction between UBE2I and the substrate, and as a SUMO-tethering factor. Plays a crucial role as a transcriptional coregulation in various cellular pathways, including the STAT pathway and the steroid hormone signaling pathway. Repressor of STAT3 signaling via inhibiting STAT3 DNA-binding and suppressing cell growth. Repressor of MITF transcriptional activity. Enhances the sumoylation of MTA1 and may participate in its paralog-selective sumoylation. Sumoylates CCAR2 which promotes its interaction with SIRT1. Diminishes the sumoylation of ZFHX3 by preventing the colocalization of ZFHX3 with SUMO1 in the nucleus. This is E3 SUMO-protein ligase PIAS3 (Pias3) from Mus musculus (Mouse).